Here is a 103-residue protein sequence, read N- to C-terminus: Large ribosomal subunit protein bL21 (103 aa).

This sequence belongs to the bacterial ribosomal protein bL21 family. In terms of assembly, part of the 50S ribosomal subunit. Contacts protein L20.

Functionally, this protein binds to 23S rRNA in the presence of protein L20. In Hamiltonella defensa subsp. Acyrthosiphon pisum (strain 5AT), this protein is Large ribosomal subunit protein bL21.